Here is a 252-residue protein sequence, read N- to C-terminus: MPEGDTVFHTAAALRAALEGKTLTRCDVRVPRYATVDLSGAVVDEVLSRGKHLFIRAGSASIHSHLKMEGAWRIGHTKVAPHRIRIVLETADTRAIGIDLGILEVLDRGTDMDAVAYLGPDLLGPDWEPRVAADNLAADPDRPLAQALLDQRVMAGVGNVYCNELCFVFGRLPTAPVGTLKDPLRVVQRARDMLWLNRSRWNRTTTGDTRNGRQLWVYGRAGEPCRRCGTLIQTDRGGERVTYWCPVCQTAS.

Pro2 (schiff-base intermediate with DNA) is an active-site residue. The active-site Proton donor is Glu3. Lys51 serves as the catalytic Proton donor (in beta-elimination). The segment at 216–250 (WVYGRAGEPCRRCGTLIQTDRGGERVTYWCPVCQT) adopts an FPG-type zinc-finger fold. Zn(2+)-binding residues include Cys225, Cys228, Cys245, and Cys248.

The protein belongs to the FPG family. In terms of assembly, monomer. The cofactor is Zn(2+).

It catalyses the reaction 2'-deoxyribonucleotide-(2'-deoxyribose 5'-phosphate)-2'-deoxyribonucleotide-DNA = a 3'-end 2'-deoxyribonucleotide-(2,3-dehydro-2,3-deoxyribose 5'-phosphate)-DNA + a 5'-end 5'-phospho-2'-deoxyribonucleoside-DNA + H(+). Involved in base excision repair of DNA damaged by oxidation or by mutagenic agents. Acts as DNA glycosylase that recognizes and removes damaged bases. Its function is as follows. Involved in the repair of psoralen-UVA DNA cross-links. A lyase that cleaves single-stranded (ss)DNA but not double-stranded (ds)DNA with an abasic site. Has 5-hydroxyuracil (5-OH-U) glycosylase activity on ssDNA with 5-OH-U, with 10-fold less activity on dsDNA, but weak to no uracil glycosylase activity. Has weak glycosylase activity on thymine glycol and dihydrothymine residues in ssDNA. Cleaves the DNA backbone by beta-delta elimination to generate a single-strand break at the site of the removed base with both 3'- and 5'-phosphates. This chain is DNA-(apurinic or apyrimidinic site) lyase Nei2, found in Mycolicibacterium smegmatis (strain ATCC 700084 / mc(2)155) (Mycobacterium smegmatis).